A 72-amino-acid chain; its full sequence is ATP synthase subunit c (72 aa).

A run of 2 helical transmembrane segments spans residues 5-25 and 52-72; these read LLAAGIAVLAGIGAGIGIGIA and GLSEATAIYGLVISIILLFVV.

It belongs to the ATPase C chain family. F-type ATPases have 2 components, F(1) - the catalytic core - and F(0) - the membrane proton channel. F(1) has five subunits: alpha(3), beta(3), gamma(1), delta(1), epsilon(1). F(0) has three main subunits: a(1), b(2) and c(10-14). The alpha and beta chains form an alternating ring which encloses part of the gamma chain. F(1) is attached to F(0) by a central stalk formed by the gamma and epsilon chains, while a peripheral stalk is formed by the delta and b chains.

The protein resides in the cell membrane. Its function is as follows. F(1)F(0) ATP synthase produces ATP from ADP in the presence of a proton or sodium gradient. F-type ATPases consist of two structural domains, F(1) containing the extramembraneous catalytic core and F(0) containing the membrane proton channel, linked together by a central stalk and a peripheral stalk. During catalysis, ATP synthesis in the catalytic domain of F(1) is coupled via a rotary mechanism of the central stalk subunits to proton translocation. Functionally, key component of the F(0) channel; it plays a direct role in translocation across the membrane. A homomeric c-ring of between 10-14 subunits forms the central stalk rotor element with the F(1) delta and epsilon subunits. The polypeptide is ATP synthase subunit c (Clostridium perfringens (strain SM101 / Type A)).